A 543-amino-acid polypeptide reads, in one-letter code: CTP synthase (543 aa).

The amidoligase domain stretch occupies residues 1 to 267; it reads MKQTKYIFVT…LSPIAEILDL (267 aa). Ser-15 contributes to the CTP binding site. Residue Ser-15 participates in UTP binding. Residues 16–21 and Asp-73 each bind ATP; that span reads SLGKGI. The Mg(2+) site is built by Asp-73 and Glu-141. CTP-binding positions include 148–150, 188–193, and Lys-224; these read DIE and KTKPTQ. Residues 188–193 and Lys-224 each bind UTP; that span reads KTKPTQ. The region spanning 292–543 is the Glutamine amidotransferase type-1 domain; that stretch reads KIAFVGKYVD…IKAAINYEDN (252 aa). Residue Gly-354 coordinates L-glutamine. Residue Cys-381 is the Nucleophile; for glutamine hydrolysis of the active site. L-glutamine-binding positions include 382–385, Glu-405, and Arg-473; that span reads LGMQ. Active-site residues include His-516 and Glu-518.

It belongs to the CTP synthase family. Homotetramer.

It catalyses the reaction UTP + L-glutamine + ATP + H2O = CTP + L-glutamate + ADP + phosphate + 2 H(+). It carries out the reaction L-glutamine + H2O = L-glutamate + NH4(+). The enzyme catalyses UTP + NH4(+) + ATP = CTP + ADP + phosphate + 2 H(+). It participates in pyrimidine metabolism; CTP biosynthesis via de novo pathway; CTP from UDP: step 2/2. With respect to regulation, allosterically activated by GTP, when glutamine is the substrate; GTP has no effect on the reaction when ammonia is the substrate. The allosteric effector GTP functions by stabilizing the protein conformation that binds the tetrahedral intermediate(s) formed during glutamine hydrolysis. Inhibited by the product CTP, via allosteric rather than competitive inhibition. In terms of biological role, catalyzes the ATP-dependent amination of UTP to CTP with either L-glutamine or ammonia as the source of nitrogen. Regulates intracellular CTP levels through interactions with the four ribonucleotide triphosphates. The protein is CTP synthase of Campylobacter jejuni subsp. jejuni serotype O:2 (strain ATCC 700819 / NCTC 11168).